We begin with the raw amino-acid sequence, 31 residues long: Cytochrome b6-f complex subunit 6 (31 aa).

The chain crosses the membrane as a helical span at residues 4–24 (ITSYFGFLLAALTITSVLFIG).

It belongs to the PetL family. The 4 large subunits of the cytochrome b6-f complex are cytochrome b6, subunit IV (17 kDa polypeptide, PetD), cytochrome f and the Rieske protein, while the 4 small subunits are PetG, PetL, PetM and PetN. The complex functions as a dimer.

The protein resides in the plastid. It localises to the chloroplast thylakoid membrane. Functionally, component of the cytochrome b6-f complex, which mediates electron transfer between photosystem II (PSII) and photosystem I (PSI), cyclic electron flow around PSI, and state transitions. PetL is important for photoautotrophic growth as well as for electron transfer efficiency and stability of the cytochrome b6-f complex. This chain is Cytochrome b6-f complex subunit 6, found in Nandina domestica (Heavenly bamboo).